Here is a 364-residue protein sequence, read N- to C-terminus: Aminomethyltransferase (364 aa).

It belongs to the GcvT family. As to quaternary structure, the glycine cleavage system is composed of four proteins: P, T, L and H.

It carries out the reaction N(6)-[(R)-S(8)-aminomethyldihydrolipoyl]-L-lysyl-[protein] + (6S)-5,6,7,8-tetrahydrofolate = N(6)-[(R)-dihydrolipoyl]-L-lysyl-[protein] + (6R)-5,10-methylene-5,6,7,8-tetrahydrofolate + NH4(+). The glycine cleavage system catalyzes the degradation of glycine. The protein is Aminomethyltransferase of Shewanella baltica (strain OS155 / ATCC BAA-1091).